We begin with the raw amino-acid sequence, 445 residues long: Probable glycine dehydrogenase (decarboxylating) subunit 1 (445 aa).

The protein belongs to the GcvP family. N-terminal subunit subfamily. In terms of assembly, the glycine cleavage system is composed of four proteins: P, T, L and H. In this organism, the P 'protein' is a heterodimer of two subunits.

The enzyme catalyses N(6)-[(R)-lipoyl]-L-lysyl-[glycine-cleavage complex H protein] + glycine + H(+) = N(6)-[(R)-S(8)-aminomethyldihydrolipoyl]-L-lysyl-[glycine-cleavage complex H protein] + CO2. Its function is as follows. The glycine cleavage system catalyzes the degradation of glycine. The P protein binds the alpha-amino group of glycine through its pyridoxal phosphate cofactor; CO(2) is released and the remaining methylamine moiety is then transferred to the lipoamide cofactor of the H protein. The sequence is that of Probable glycine dehydrogenase (decarboxylating) subunit 1 from Anaeromyxobacter dehalogenans (strain 2CP-C).